The chain runs to 192 residues: Adenylate kinase (192 aa).

An ATP-binding site is contributed by 10 to 15 (GAGKGT). Residues 30 to 59 (STGDMLREVIRRETEIGKKAKAMINAGTLV) form an NMP region. AMP is bound by residues Thr-31, Arg-36, 57-59 (TLV), 85-88 (GYPR), and Gln-92. Residues 126-142 (KRVQETIIAGGQVRSDD) are LID. Arg-127 lines the ATP pocket. Residues Arg-139 and Arg-150 each contribute to the AMP site. Ile-178 is a binding site for ATP.

It belongs to the adenylate kinase family. Monomer.

Its subcellular location is the cytoplasm. It carries out the reaction AMP + ATP = 2 ADP. Its pathway is purine metabolism; AMP biosynthesis via salvage pathway; AMP from ADP: step 1/1. Its function is as follows. Catalyzes the reversible transfer of the terminal phosphate group between ATP and AMP. Plays an important role in cellular energy homeostasis and in adenine nucleotide metabolism. The protein is Adenylate kinase of Bartonella henselae (strain ATCC 49882 / DSM 28221 / CCUG 30454 / Houston 1) (Rochalimaea henselae).